The following is a 382-amino-acid chain: Mannitol-1-phosphate 5-dehydrogenase (382 aa).

NAD(+) is bound at residue 3–14; the sequence is ALHFGAGNIGRG. Lys-269 bears the N6-acetyllysine mark.

The protein belongs to the mannitol dehydrogenase family.

The catalysed reaction is D-mannitol 1-phosphate + NAD(+) = beta-D-fructose 6-phosphate + NADH + H(+). The polypeptide is Mannitol-1-phosphate 5-dehydrogenase (Escherichia coli O9:H4 (strain HS)).